Consider the following 658-residue polypeptide: Carnitine O-palmitoyltransferase 2, mitochondrial (658 aa).

The transit peptide at M1–L25 directs the protein to the mitochondrion. Residues S26–L178 lie on the Mitochondrial matrix side of the membrane. K69 bears the N6-succinyllysine mark. Position 79 is an N6-acetyllysine (K79). N6-succinyllysine is present on K85. Residues N179–N208 constitute an intramembrane region (note=Mitochondrial inner membrane). Over A209–T658 the chain is Mitochondrial matrix. K239 bears the N6-acetyllysine; alternate mark. The residue at position 239 (K239) is an N6-succinyllysine; alternate. The Proton acceptor role is filled by H372. K418 carries the post-translational modification N6-acetyllysine; alternate. K418 is subject to N6-succinyllysine; alternate. N6-succinyllysine occurs at positions 424 and 439. G452–D464 lines the CoA pocket. Residues Y486, S488, and T499 each contribute to the (R)-carnitine site. Residue K510 is modified to N6-acetyllysine; alternate. K510 is modified (N6-succinyllysine; alternate).

It belongs to the carnitine/choline acetyltransferase family.

The protein localises to the mitochondrion inner membrane. It carries out the reaction (R)-carnitine + hexadecanoyl-CoA = O-hexadecanoyl-(R)-carnitine + CoA. The catalysed reaction is octanoyl-CoA + (R)-carnitine = O-octanoyl-(R)-carnitine + CoA. The enzyme catalyses decanoyl-CoA + (R)-carnitine = O-decanoyl-(R)-carnitine + CoA. It catalyses the reaction dodecanoyl-CoA + (R)-carnitine = O-dodecanoyl-R-carnitine + CoA. It carries out the reaction tetradecanoyl-CoA + (R)-carnitine = O-tetradecanoyl-(R)-carnitine + CoA. The catalysed reaction is (R)-carnitine + octadecanoyl-CoA = O-octadecanoyl-(R)-carnitine + CoA. The enzyme catalyses eicosanoyl-CoA + (R)-carnitine = O-eicosanoyl-(R)-carnitine + CoA. It catalyses the reaction (9Z)-tetradecenoyl-CoA + (R)-carnitine = O-(9Z)-tetradecenoyl-(R)-carnitine + CoA. It carries out the reaction (5Z)-tetradecenoyl-CoA + (R)-carnitine = O-(5Z)-tetradecenoyl-(R)-carnitine + CoA. The catalysed reaction is (R)-carnitine + (9Z)-octadecenoyl-CoA = O-(9Z)-octadecenoyl-(R)-carnitine + CoA. The enzyme catalyses 4,8-dimethylnonanoyl-CoA + (R)-carnitine = O-4,8-dimethylnonanoyl-(R)-carnitine + CoA. The protein operates within lipid metabolism; fatty acid beta-oxidation. In terms of biological role, involved in the intramitochondrial synthesis of acylcarnitines from accumulated acyl-CoA metabolites. Reconverts acylcarnitines back into the respective acyl-CoA esters that can then undergo beta-oxidation, an essential step for the mitochondrial uptake of long-chain fatty acids and their subsequent beta-oxidation in the mitochondrion. Active with medium (C8-C12) and long-chain (C14-C18) acyl-CoA esters. The sequence is that of Carnitine O-palmitoyltransferase 2, mitochondrial (CPT2) from Bos taurus (Bovine).